A 312-amino-acid chain; its full sequence is tRNA-cytidine(32) 2-sulfurtransferase (312 aa).

The short motif at 39–44 (SGGKDS) is the PP-loop motif element. [4Fe-4S] cluster-binding residues include Cys114, Cys117, and Cys205.

Belongs to the TtcA family. Homodimer. The cofactor is Mg(2+). Requires [4Fe-4S] cluster as cofactor.

The protein localises to the cytoplasm. It catalyses the reaction cytidine(32) in tRNA + S-sulfanyl-L-cysteinyl-[cysteine desulfurase] + AH2 + ATP = 2-thiocytidine(32) in tRNA + L-cysteinyl-[cysteine desulfurase] + A + AMP + diphosphate + H(+). It functions in the pathway tRNA modification. In terms of biological role, catalyzes the ATP-dependent 2-thiolation of cytidine in position 32 of tRNA, to form 2-thiocytidine (s(2)C32). The sulfur atoms are provided by the cysteine/cysteine desulfurase (IscS) system. This is tRNA-cytidine(32) 2-sulfurtransferase from Ralstonia nicotianae (strain ATCC BAA-1114 / GMI1000) (Ralstonia solanacearum).